A 242-amino-acid chain; its full sequence is Probable porphobilinogen deaminase (242 aa).

The protein belongs to the HMBS family.

The enzyme catalyses 4 porphobilinogen + H2O = hydroxymethylbilane + 4 NH4(+). It functions in the pathway porphyrin-containing compound metabolism; protoporphyrin-IX biosynthesis; coproporphyrinogen-III from 5-aminolevulinate: step 2/4. In terms of biological role, tetrapolymerization of the monopyrrole PBG into the hydroxymethylbilane pre-uroporphyrinogen in several discrete steps. The chain is Probable porphobilinogen deaminase (hemC) from Chlamydia muridarum (strain MoPn / Nigg).